We begin with the raw amino-acid sequence, 366 residues long: tRNA(Met) cytidine acetate ligase (366 aa).

ATP is bound by residues 7 to 20 (IAEFNPFHYGHQYL), glycine 96, asparagine 152, and arginine 175.

The protein belongs to the TmcAL family.

It is found in the cytoplasm. It catalyses the reaction cytidine(34) in elongator tRNA(Met) + acetate + ATP = N(4)-acetylcytidine(34) in elongator tRNA(Met) + AMP + diphosphate. Its function is as follows. Catalyzes the formation of N(4)-acetylcytidine (ac(4)C) at the wobble position of elongator tRNA(Met), using acetate and ATP as substrates. First activates an acetate ion to form acetyladenylate (Ac-AMP) and then transfers the acetyl group to tRNA to form ac(4)C34. In Streptococcus equi subsp. zooepidemicus (strain H70), this protein is tRNA(Met) cytidine acetate ligase.